The chain runs to 316 residues: Ribosomal RNA small subunit methyltransferase H (316 aa).

S-adenosyl-L-methionine-binding positions include 32-34 (AGH), D52, F79, D106, and Q113.

It belongs to the methyltransferase superfamily. RsmH family.

It localises to the cytoplasm. The enzyme catalyses cytidine(1402) in 16S rRNA + S-adenosyl-L-methionine = N(4)-methylcytidine(1402) in 16S rRNA + S-adenosyl-L-homocysteine + H(+). Its function is as follows. Specifically methylates the N4 position of cytidine in position 1402 (C1402) of 16S rRNA. The polypeptide is Ribosomal RNA small subunit methyltransferase H (Paenibacillus sp. (strain JDR-2)).